The chain runs to 434 residues: D-amino acid dehydrogenase (434 aa).

3-17 (VIVLGSGVIGTTTAY) is a binding site for FAD.

This sequence belongs to the DadA oxidoreductase family. Requires FAD as cofactor.

The catalysed reaction is a D-alpha-amino acid + A + H2O = a 2-oxocarboxylate + AH2 + NH4(+). Oxidative deamination of D-amino acids. The chain is D-amino acid dehydrogenase from Bordetella parapertussis (strain 12822 / ATCC BAA-587 / NCTC 13253).